The sequence spans 644 residues: Threonine--tRNA ligase (644 aa).

Residues 1–61 (MVAITLPDGN…TQDASVEIVT (61 aa)) form the TGS domain. A catalytic region spans residues 242 to 533 (DHRKIGKALN…LIEHYAGWMP (292 aa)). Zn(2+) is bound by residues Cys-333, His-384, and His-510.

This sequence belongs to the class-II aminoacyl-tRNA synthetase family. As to quaternary structure, homodimer. Zn(2+) serves as cofactor.

It localises to the cytoplasm. It carries out the reaction tRNA(Thr) + L-threonine + ATP = L-threonyl-tRNA(Thr) + AMP + diphosphate + H(+). Its function is as follows. Catalyzes the attachment of threonine to tRNA(Thr) in a two-step reaction: L-threonine is first activated by ATP to form Thr-AMP and then transferred to the acceptor end of tRNA(Thr). Also edits incorrectly charged L-seryl-tRNA(Thr). The chain is Threonine--tRNA ligase from Psychrobacter sp. (strain PRwf-1).